A 271-amino-acid polypeptide reads, in one-letter code: Ribosomal RNA small subunit methyltransferase A (271 aa).

Residues His11, Leu13, Gly38, Glu59, Asp84, and Asn109 each coordinate S-adenosyl-L-methionine.

It belongs to the class I-like SAM-binding methyltransferase superfamily. rRNA adenine N(6)-methyltransferase family. RsmA subfamily.

It is found in the cytoplasm. The catalysed reaction is adenosine(1518)/adenosine(1519) in 16S rRNA + 4 S-adenosyl-L-methionine = N(6)-dimethyladenosine(1518)/N(6)-dimethyladenosine(1519) in 16S rRNA + 4 S-adenosyl-L-homocysteine + 4 H(+). Its function is as follows. Specifically dimethylates two adjacent adenosines (A1518 and A1519) in the loop of a conserved hairpin near the 3'-end of 16S rRNA in the 30S particle. May play a critical role in biogenesis of 30S subunits. The sequence is that of Ribosomal RNA small subunit methyltransferase A from Nostoc sp. (strain PCC 7120 / SAG 25.82 / UTEX 2576).